A 221-amino-acid chain; its full sequence is Deoxyribose-phosphate aldolase (221 aa).

Residue Asp-90 is the Proton donor/acceptor of the active site. Residue Lys-152 is the Schiff-base intermediate with acetaldehyde of the active site. The active-site Proton donor/acceptor is the Lys-181.

Belongs to the DeoC/FbaB aldolase family. DeoC type 1 subfamily.

It localises to the cytoplasm. It carries out the reaction 2-deoxy-D-ribose 5-phosphate = D-glyceraldehyde 3-phosphate + acetaldehyde. Its pathway is carbohydrate degradation; 2-deoxy-D-ribose 1-phosphate degradation; D-glyceraldehyde 3-phosphate and acetaldehyde from 2-deoxy-alpha-D-ribose 1-phosphate: step 2/2. In terms of biological role, catalyzes a reversible aldol reaction between acetaldehyde and D-glyceraldehyde 3-phosphate to generate 2-deoxy-D-ribose 5-phosphate. The polypeptide is Deoxyribose-phosphate aldolase (Exiguobacterium sibiricum (strain DSM 17290 / CCUG 55495 / CIP 109462 / JCM 13490 / 255-15)).